A 697-amino-acid chain; its full sequence is T-related protein (697 aa).

Residues Met1–Gly60 are disordered. Gly residues-rich tracts occupy residues Val20–Ser35 and His50–Gly60. Residues Leu96 to Asp264 constitute a DNA-binding region (T-box). Low complexity predominate over residues Ser316 to Ser330. 2 disordered regions span residues Ser316–Gly407 and Val462–Pro488. A compositionally biased stretch (polar residues) spans Ser337 to Tyr351. 3 stretches are compositionally biased toward low complexity: residues Ser352–Ser373, Gln381–Ser401, and Ser469–Pro488.

It is found in the nucleus. Functionally, required for the specification of the hindgut and anal pads. This is T-related protein (byn) from Drosophila melanogaster (Fruit fly).